The following is a 392-amino-acid chain: Formate-dependent phosphoribosylglycinamide formyltransferase (392 aa).

Residues 22-23 and glutamate 82 contribute to the N(1)-(5-phospho-beta-D-ribosyl)glycinamide site; that span reads EL. Residues arginine 114, lysine 155, 160-165, 195-198, and glutamate 203 contribute to the ATP site; these read SSGKGQ and EGVV. Residues 119 to 308 enclose the ATP-grasp domain; that stretch reads RLAAEELGLP…EFALHVRAFL (190 aa). Glutamate 267 and glutamate 279 together coordinate Mg(2+). N(1)-(5-phospho-beta-D-ribosyl)glycinamide contacts are provided by residues aspartate 286, lysine 355, and 362–363; that span reads RR.

It belongs to the PurK/PurT family. As to quaternary structure, homodimer.

The enzyme catalyses N(1)-(5-phospho-beta-D-ribosyl)glycinamide + formate + ATP = N(2)-formyl-N(1)-(5-phospho-beta-D-ribosyl)glycinamide + ADP + phosphate + H(+). It functions in the pathway purine metabolism; IMP biosynthesis via de novo pathway; N(2)-formyl-N(1)-(5-phospho-D-ribosyl)glycinamide from N(1)-(5-phospho-D-ribosyl)glycinamide (formate route): step 1/1. Functionally, involved in the de novo purine biosynthesis. Catalyzes the transfer of formate to 5-phospho-ribosyl-glycinamide (GAR), producing 5-phospho-ribosyl-N-formylglycinamide (FGAR). Formate is provided by PurU via hydrolysis of 10-formyl-tetrahydrofolate. The protein is Formate-dependent phosphoribosylglycinamide formyltransferase of Salmonella schwarzengrund (strain CVM19633).